We begin with the raw amino-acid sequence, 437 residues long: Endoplasmic reticulum protein SC65 (437 aa).

A signal peptide spans 1-18 (MARVAWGLLWLLLGSAGA). N361 is a glycosylation site (N-linked (GlcNAc...) asparagine). 2 stretches are compositionally biased toward acidic residues: residues 381 to 413 (DEME…EEGM) and 428 to 437 (AEAEPEPELA). The interval 381 to 437 (DEMELEETEPPLEPEDALSDAEFEGEGDYEEGMYADWWQEPDAKGDEAEAEPEPELA) is disordered.

Belongs to the leprecan family. Interacts with PLOD1, P3H3 and PPIB. Identified in a complex with PLOD1 and P3H3. Detected in fibroblasts (at protein level). Detected in spleen, prostate, testis, ovary, colon, pancreas, kidney, placenta and heart.

It localises to the endoplasmic reticulum. In terms of biological role, part of a complex composed of PLOD1, P3H3 and P3H4 that catalyzes hydroxylation of lysine residues in collagen alpha chains and is required for normal assembly and cross-linking of collagen fibrils. Required for normal bone density and normal skin stability via its role in hydroxylation of lysine residues in collagen alpha chains and in collagen fibril assembly. In Homo sapiens (Human), this protein is Endoplasmic reticulum protein SC65.